The following is a 289-amino-acid chain: Diaminopimelate epimerase (289 aa).

The substrate site is built by Asn-17, Gln-47, and Asn-67. The active-site Proton donor is Cys-76. Residues 77 to 78 (GN), Asn-164, Asn-198, and 216 to 217 (ER) each bind substrate. Catalysis depends on Cys-225, which acts as the Proton acceptor. Position 226–227 (226–227 (GS)) interacts with substrate.

This sequence belongs to the diaminopimelate epimerase family. Homodimer.

It is found in the cytoplasm. It carries out the reaction (2S,6S)-2,6-diaminopimelate = meso-2,6-diaminopimelate. Its pathway is amino-acid biosynthesis; L-lysine biosynthesis via DAP pathway; DL-2,6-diaminopimelate from LL-2,6-diaminopimelate: step 1/1. Catalyzes the stereoinversion of LL-2,6-diaminopimelate (L,L-DAP) to meso-diaminopimelate (meso-DAP), a precursor of L-lysine and an essential component of the bacterial peptidoglycan. In Bradyrhizobium sp. (strain ORS 278), this protein is Diaminopimelate epimerase.